Consider the following 325-residue polypeptide: MSWFTPEVIDILISIVKAVVILLVVVTCGAFMSFGERRLLGLFQNRYGPNRVGWGGSLQLVADMIKMFFKEDWVPKFSDRVIFTLAPMIAFTSLLLAFAIVPVSPTWAVSDLNIGILFFLMMAGLAVYAVLFAGWSSNNKYSLLGAMRASAQTLSYEVFIGLSLMGVVAQADSFNMQAIVESQAHMWNVIPQFFGFITFAIAGVAVCHRHPFDQPEAEQELADGYHIEYSGMKFGLFFVGEYIGIVTVSALIVTLFFGGWQGPFLPPFVWFALKTAFFMMMFILIRAALPRPRYDQVMSFGWKVCLPLTLLNLLATAAVILYNAQ.

A run of 8 helical transmembrane segments spans residues 11-31 (ILIS…CGAF), 81-101 (VIFT…FAIV), 114-134 (IGIL…LFAG), 149-169 (ASAQ…GVVA), 186-206 (MWNV…GVAV), 237-257 (FFVG…TLFF), 265-285 (LPPF…FILI), and 304-324 (VCLP…LYNA).

Belongs to the complex I subunit 1 family. In terms of assembly, NDH-1 is composed of 13 different subunits. Subunits NuoA, H, J, K, L, M, N constitute the membrane sector of the complex.

It is found in the cell inner membrane. The catalysed reaction is a quinone + NADH + 5 H(+)(in) = a quinol + NAD(+) + 4 H(+)(out). Its function is as follows. NDH-1 shuttles electrons from NADH, via FMN and iron-sulfur (Fe-S) centers, to quinones in the respiratory chain. The immediate electron acceptor for the enzyme in this species is believed to be ubiquinone. Couples the redox reaction to proton translocation (for every two electrons transferred, four hydrogen ions are translocated across the cytoplasmic membrane), and thus conserves the redox energy in a proton gradient. This subunit may bind ubiquinone. The sequence is that of NADH-quinone oxidoreductase subunit H from Serratia proteamaculans (strain 568).